The following is a 426-amino-acid chain: MLDNQLLRENPQYVATQLLKRGFQFDAVTFSQLEEKRKALQVSTQSLQNERNLRSKAIGEAKSRGENIEPMREEVNKLGAKLEQQKTELDEVLKQIEVISLSLPNIPHESVPVGKDELDNQEIRKWGDVPAFSFPVKSHDELGEALGQMDFALAAKITGSRFVVMKGHLARLHRALIQFMLDIHIQQHGYQEIYVPYIVNADSLLGTGQLPKFEADLFKLTGDNGYYLTSTSEIPVTNTVREMILSAEQLPIRYVCHSPCFRSEAGSYGKDTKGMIRQHQFEKVELVWITKPEDSYNALEQLTQHAEVILQRLNLPYRVVALCTGDIGAGSAKTYDLEVWLPSQNTYREISSCSNMEAFQARRMKARFRNPDTNEIQLVHTLNGSGLAVGRTLVAIMENYQDEHGNIHIPDALKPYLGGIDIISVK.

231-233 (TSE) provides a ligand contact to L-serine. 262 to 264 (RSE) lines the ATP pocket. An L-serine-binding site is contributed by E285. Residue 349–352 (EISS) coordinates ATP. S385 lines the L-serine pocket.

It belongs to the class-II aminoacyl-tRNA synthetase family. Type-1 seryl-tRNA synthetase subfamily. As to quaternary structure, homodimer. The tRNA molecule binds across the dimer.

The protein localises to the cytoplasm. The enzyme catalyses tRNA(Ser) + L-serine + ATP = L-seryl-tRNA(Ser) + AMP + diphosphate + H(+). The catalysed reaction is tRNA(Sec) + L-serine + ATP = L-seryl-tRNA(Sec) + AMP + diphosphate + H(+). Its pathway is aminoacyl-tRNA biosynthesis; selenocysteinyl-tRNA(Sec) biosynthesis; L-seryl-tRNA(Sec) from L-serine and tRNA(Sec): step 1/1. Functionally, catalyzes the attachment of serine to tRNA(Ser). Is also able to aminoacylate tRNA(Sec) with serine, to form the misacylated tRNA L-seryl-tRNA(Sec), which will be further converted into selenocysteinyl-tRNA(Sec). The polypeptide is Serine--tRNA ligase (Legionella pneumophila (strain Corby)).